A 349-amino-acid polypeptide reads, in one-letter code: ATP synthase subunit a-2 (349 aa).

Positions 1–97 are excised as a propeptide; it reads MERLTRLNHF…SNYMKLMEIP (97 aa). 7 helical membrane passes run 118–138, 184–204, 213–233, 240–260, 280–300, 303–323, and 326–346; these read FSFT…LLLI, FFPC…QGMI, HFLI…IVGF, FFSF…LVLL, MMAG…MLCM, IFYF…TGLE, and VAIL…NDAI.

The protein belongs to the ATPase A chain family. F-type ATPases have 2 components, CF(1) - the catalytic core - and CF(0) - the membrane proton channel. CF(1) has five subunits: alpha(3), beta(3), gamma(1), delta(1), epsilon(1). CF(0) has three main subunits: a, b and c.

The protein localises to the mitochondrion inner membrane. In terms of biological role, mitochondrial membrane ATP synthase (F(1)F(0) ATP synthase or Complex V) produces ATP from ADP in the presence of a proton gradient across the membrane which is generated by electron transport complexes of the respiratory chain. F-type ATPases consist of two structural domains, F(1) - containing the extramembraneous catalytic core and F(0) - containing the membrane proton channel, linked together by a central stalk and a peripheral stalk. During catalysis, ATP synthesis in the catalytic domain of F(1) is coupled via a rotary mechanism of the central stalk subunits to proton translocation. Key component of the proton channel; it may play a direct role in the translocation of protons across the membrane. The polypeptide is ATP synthase subunit a-2 (ATP6-2) (Arabidopsis thaliana (Mouse-ear cress)).